Reading from the N-terminus, the 444-residue chain is Phosphoglucosamine mutase (444 aa).

The active-site Phosphoserine intermediate is serine 103. 4 residues coordinate Mg(2+): serine 103, aspartate 242, aspartate 244, and aspartate 246. Serine 103 carries the post-translational modification Phosphoserine.

Belongs to the phosphohexose mutase family. Mg(2+) is required as a cofactor. In terms of processing, activated by phosphorylation.

The enzyme catalyses alpha-D-glucosamine 1-phosphate = D-glucosamine 6-phosphate. Functionally, catalyzes the conversion of glucosamine-6-phosphate to glucosamine-1-phosphate. The sequence is that of Phosphoglucosamine mutase from Hydrogenovibrio crunogenus (strain DSM 25203 / XCL-2) (Thiomicrospira crunogena).